Consider the following 291-residue polypeptide: Probable ABC transporter permease protein PH1038 (291 aa).

The next 8 membrane-spanning stretches (helical) occupy residues 7–27 (PFFFLLPALTLMVPFVIYPVF), 75–95 (IVWIAIHLPTTIFLGLGFALL), 106–126 (IIKSIIFLGMVIPMVVGGLII), 133–153 (GAGVIPAFFKLIGIEKLAITW), 160–180 (ALFSVILGSIWIWTGFSMLMY), 208–228 (FVIWPLLRPITVVIVAMTLLW), 232–252 (IFDIVYVATGGGPGGASMVLA), and 267–287 (YAAVVAVLLTALTFIPALWLI). Positions 71–286 (LIHNIVWIAI…ALTFIPALWL (216 aa)) constitute an ABC transmembrane type-1 domain.

Belongs to the binding-protein-dependent transport system permease family. MalFG subfamily.

The protein resides in the cell membrane. Its function is as follows. Probably part of a binding-protein-dependent transport system PH1036/38/39. Probably responsible for the translocation of the substrate across the membrane. In Pyrococcus horikoshii (strain ATCC 700860 / DSM 12428 / JCM 9974 / NBRC 100139 / OT-3), this protein is Probable ABC transporter permease protein PH1038.